A 332-amino-acid chain; its full sequence is uncharacterized protein (332 aa).

Acidic residues-rich tracts occupy residues 290 to 314 (EDIDDIDDSDESDDSDDSEDSDSFG) and 323 to 332 (EDSEDSDNSE). Positions 290–332 (EDIDDIDDSDESDDSDDSEDSDSFGDSDSSGNSEDSEDSDNSE) are disordered.

This sequence belongs to the mimivirus L17x/L18x family.

This is an uncharacterized protein from Acanthamoeba polyphaga mimivirus (APMV).